Here is an 879-residue protein sequence, read N- to C-terminus: Beta-mannosidase (879 aa).

The N-terminal stretch at 1 to 17 (MLLRLLLLLAPCGAGFA) is a signal peptide. Residues Asn35 and Asn77 are each glycosylated (N-linked (GlcNAc...) asparagine). A disulfide bridge connects residues Cys167 and Cys176. 190–192 (WDW) contacts substrate. N-linked (GlcNAc...) asparagine glycosylation occurs at Asn297. Residue Asn456 participates in substrate binding. Catalysis depends on Glu457, which acts as the Proton donor. 3 disulfides stabilise this stretch: Cys540–Cys629, Cys732–Cys761, and Cys764–Cys769. Glu554 (nucleophile) is an active-site residue. N-linked (GlcNAc...) asparagine glycosylation is present at Asn803.

It belongs to the glycosyl hydrolase 2 family. In terms of assembly, monomer. Post-translationally, N-glycosylated. In terms of tissue distribution, detected in kidney (at protein level). Found in spleen and to a lesser extent in liver. Not detected in kidney or brain.

It localises to the lysosome. It carries out the reaction Hydrolysis of terminal, non-reducing beta-D-mannose residues in beta-D-mannosides.. Its pathway is glycan metabolism; N-glycan degradation. Functionally, exoglycosidase that cleaves the single beta-linked mannose residue from the non-reducing end of all N-linked glycoprotein oligosaccharides. The chain is Beta-mannosidase (MANBA) from Capra hircus (Goat).